Here is a 394-residue protein sequence, read N- to C-terminus: Elongation factor Tu 2 (394 aa).

In terms of domain architecture, tr-type G spans K10–E204. The interval G19–T26 is G1. Residue G19 to T26 participates in GTP binding. Residue T26 participates in Mg(2+) binding. The segment at G60–S64 is G2. Positions D81 to G84 are G3. GTP contacts are provided by residues D81 to H85 and N136 to D139. The G4 stretch occupies residues N136–D139. Residues S174 to L176 form a G5 region.

Belongs to the TRAFAC class translation factor GTPase superfamily. Classic translation factor GTPase family. EF-Tu/EF-1A subfamily. In terms of assembly, monomer.

It is found in the cytoplasm. The enzyme catalyses GTP + H2O = GDP + phosphate + H(+). Functionally, GTP hydrolase that promotes the GTP-dependent binding of aminoacyl-tRNA to the A-site of ribosomes during protein biosynthesis. This Pseudoalteromonas translucida (strain TAC 125) protein is Elongation factor Tu 2.